Consider the following 1234-residue polypeptide: PAN2-PAN3 deadenylation complex catalytic subunit PAN2 (1234 aa).

The segment at 12–32 (LKNSNNNSNSNSSSNNSSNGV) is disordered. Residues 14-30 (NSNNNSNSNSSSNNSSN) are compositionally biased toward low complexity. 3 WD repeats span residues 176-213 (NHTGKVAMVKEAPKLLALASSTGSLELFDPTSNSSIKT), 272-315 (AFPA…VYHA), and 342-381 (QQQPHLSGLEISENGDFFMFNDGFSNLHLWSITNSGTLSK). Positions 323–346 (PLPPAGSSAAQQQKQQQQQQQQPH) are disordered. Positions 333–344 (QQQKQQQQQQQQ) are enriched in low complexity. The tract at residues 383 to 537 (FVNFPQEIER…DSIFQCQNDE (155 aa)) is linker. The 409-residue stretch at 538-946 (KIPNCYSRLQ…KPVIVIYQEV (409 aa)) folds into the USP domain. Residues 751–775 (PNTQQDQQQQQQQQQQQQQQQQPTN) are disordered. Positions 754–772 (QQDQQQQQQQQQQQQQQQQ) are enriched in low complexity. Asp-1004, Glu-1006, Asp-1138, and Asp-1191 together coordinate a divalent metal cation. The Exonuclease domain maps to 1072–1199 (GEAFIDDYIV…EDARTALLLY (128 aa)).

The protein belongs to the peptidase C19 family. PAN2 subfamily. Forms a heterotrimer with an asymmetric homodimer of the regulatory subunit PAN3 to form the poly(A)-nuclease (PAN) deadenylation complex. A divalent metal cation is required as a cofactor.

The protein resides in the cytoplasm. It carries out the reaction Exonucleolytic cleavage of poly(A) to 5'-AMP.. With respect to regulation, positively regulated by the regulatory subunit PAN3. In terms of biological role, catalytic subunit of the poly(A)-nuclease (PAN) deadenylation complex, one of two cytoplasmic mRNA deadenylases involved in mRNA turnover. PAN specifically shortens poly(A) tails of RNA and the activity is stimulated by poly(A)-binding protein PAB1. PAN deadenylation is followed by rapid degradation of the shortened mRNA tails by the CCR4-NOT complex. Deadenylated mRNAs are then degraded by two alternative mechanisms, namely exosome-mediated 3'-5' exonucleolytic degradation, or deadenylation-dependent mRNA decaping and subsequent 5'-3' exonucleolytic degradation by XRN1. May also be involved in post-transcriptional maturation of mRNA poly(A) tails. This chain is PAN2-PAN3 deadenylation complex catalytic subunit PAN2, found in Lodderomyces elongisporus (strain ATCC 11503 / CBS 2605 / JCM 1781 / NBRC 1676 / NRRL YB-4239) (Yeast).